We begin with the raw amino-acid sequence, 111 residues long: MENVPKENKVVEKAPVQNEAPALGGGEYQEPGGNVKGVWAPPAPGFGEDVPNRLVDNIDMIDGDGDDMERFMEEMRELRRKIRELQLRYSLRILIGDPPHHDHHDEFCLMP.

Residues 1–12 (MENVPKENKVVE) are compositionally biased toward basic and acidic residues. The tract at residues 1–37 (MENVPKENKVVEKAPVQNEAPALGGGEYQEPGGNVKG) is disordered. Residues 100 to 104 (HHDHH) form a his cluster region. C108 contributes to the Zn(2+) binding site.

This sequence belongs to the BEX family. In terms of processing, ubiquitinated. Degraded by the proteasome.

Its subcellular location is the cytoplasm. The protein is Protein BEX5 (BEX5) of Homo sapiens (Human).